Consider the following 1221-residue polypeptide: Adhesion G-protein coupled receptor G6 (1221 aa).

Positions 1 to 37 (MMFRSDRMWSCHWKWKPSPLLFLFALYIMCVPHSVWG) are cleaved as a signal peptide. Over 38 to 862 (CANCRVVLSN…ASQLDARNTK (825 aa)) the chain is Extracellular. Cys-41 and Cys-67 are disulfide-bonded. In terms of domain architecture, CUB spans 41–149 (CRVVLSNPSG…KGFNASYIRV (109 aa)). Residues Glu-89 and Asp-97 each coordinate Ca(2+). Cys-94 and Cys-111 are joined by a disulfide. A glycan (N-linked (GlcNAc...) asparagine) is linked at Asn-121. Ca(2+)-binding residues include Asp-134, Ser-136, and Ile-137. Residues Asn-143, Asn-206, Asn-258, Asn-314, Asn-324, Asn-353, Asn-438, Asn-445, Asn-452, Asn-485, Asn-488, and Asn-505 are each glycosylated (N-linked (GlcNAc...) asparagine). Positions 154 to 356 (RNQKVILPQT…ALKAESNLSC (203 aa)) constitute a Pentraxin (PTX) domain. Disulfide bonds link Cys-186–Cys-254 and Cys-231–Cys-277. The tract at residues 473-837 (EPRLVLWALL…SDASETVCLC (365 aa)) is mediates interaction with laminin-2. Intrachain disulfides connect Cys-525–Cys-560 and Cys-548–Cys-580. N-linked (GlcNAc...) asparagine glycans are attached at residues Asn-563, Asn-593, Asn-600, Asn-605, Asn-667, Asn-673, Asn-695, Asn-704, Asn-750, Asn-776, Asn-811, and Asn-818. Residues 670-853 (SHVNITTRNL…GVLMDLPRSA (184 aa)) form the GAIN-B domain. Disulfide bonds link Cys-803-Cys-835 and Cys-822-Cys-837. Positions 803–853 (CAFWDLNKNKSFGGWNTSGCVAHRDSDASETVCLCNHFTHFGVLMDLPRSA) are GPS. Residues 842–850 (HFGVLMDLP) are stachel. The helical transmembrane segment at 863-883 (VLTFISYIGCGISAIFSAATL) threads the bilayer. Residues 884–903 (LTYVAFEKLRRDYPSKILMN) lie on the Cytoplasmic side of the membrane. Residues 904–924 (LSTALLFLNLLFLLDGWITSF) form a helical membrane-spanning segment. The Extracellular segment spans residues 925–929 (NVDGL). Residues 930–950 (CIAVAVLLHFFLLATFTWMGL) traverse the membrane as a helical segment. Over 951-970 (EAIHMYIALVKVFNTYIRRY) the chain is Cytoplasmic. Residues 971 to 991 (ILKFCIIGWGLPALVVSVVLA) form a helical membrane-spanning segment. Over 992–1024 (SRNNNEVYGKESYGKEKGDEFCWIQDPVIFYVT) the chain is Extracellular. A helical transmembrane segment spans residues 1025–1045 (CAGYFGVMFFLNIAMFIVVMV). At 1046-1069 (QICGRNGKRSNRTLREEVLRNLRS) the chain is on the cytoplasmic side. A helical transmembrane segment spans residues 1070–1090 (VVSLTFLLGMTWGFAFFAWGP). Over 1091–1092 (LN) the chain is Extracellular. The chain crosses the membrane as a helical span at residues 1093–1113 (IPFMYLFSIFNSLQGLFIFIF). Asn-1103 is a binding site for 17alpha-hydroxyprogesterone. At 1114–1221 (HCAMKENVQK…GQVLVKTGPC (108 aa)) the chain is on the cytoplasmic side. The segment at 1156–1176 (NLGKSLSSSSIGSNSTYLTSK) is disordered. Phosphoserine occurs at positions 1165 and 1168.

It belongs to the G-protein coupled receptor 2 family. Adhesion G-protein coupled receptor (ADGR) subfamily. Heterodimer of 2 chains generated by proteolytic processing; the large extracellular N-terminal fragment and the membrane-bound C-terminal fragment predominantly remain associated and non-covalently linked. Interacts with Laminin-2; this interaction stabilizes the receptor in an inactive state. Laminin-2 polymerization could facilitate ADGRG6-NTF removal, thereby exposing the tethered agonist to drive myelination. Interacts with PRNP. Interacts with ITGB1. Interacts with LRP1. In terms of processing, proteolytically cleaved into 2 conserved sites: one in the GPS region of the GAIN-B domain (S1 site) and the other in the middle of the extracellular domain (S2 site). The proteolytic cleavage at S1 site generates an extracellular subunit and a seven-transmembrane subunit. Furin is involved in the cleavage of the S2 site generating a soluble fragment. Processing at the GPS region occurred independent of and probably prior to the cleavage at the S2 site. Proteolytic cleavage is required for activation of the receptor. Post-translationally, highly glycosylated. In terms of tissue distribution, expressed in placenta and to a lower extent in pancreas and liver. Detected in aortic endothelial cells but not in skin microvascular endothelial cells.

It is found in the cell membrane. Forms a heterodimer of 2 chains generated by proteolytic processing that remain associated through non-covalent interactions mediated by the GAIN-B domain. In the inactivated receptor, the Stachel sequence (also named stalk) is embedded in the GAIN-B domain, where it adopts a beta-strand conformation. On activation, the Stachel moves into the 7 transmembrane region and adopts a twisted hook-shaped configuration that forms contacts within the receptor, leading to coupling of a G-alpha protein, which activates signaling. The cleaved GAIN-B and N-terminal domains can then dissociate from the rest of the receptor. Adhesion G-protein coupled receptor (aGPCR) for steroid hormones, such as progesterone and 17alpha-hydroxyprogesterone (17OHP). Involved in many biological processes, such as myelination, sprouting angiogenesis, placenta, ear and cartilage development. Ligand binding causes a conformation change that triggers signaling via guanine nucleotide-binding proteins (G proteins) and modulates the activity of downstream effectors, such as adenylate cyclase. ADGRG6 is coupled to G(i) G alpha proteins and mediates inhibition of adenylate cyclase. Also able to couple to G(q) G proteins. Involved in myelination of the peripheral nervous system: required for differentiation of promyelinating Schwann cells and for normal myelination of axons. Also acts as a regulator of body length and bone mass. Acts as a regulator of blood-brain barrier formation in the central nervous system vie its association with LRP1 and ITGB1. The sequence is that of Adhesion G-protein coupled receptor G6 from Homo sapiens (Human).